Consider the following 554-residue polypeptide: Propanediol dehydratase large subunit (554 aa).

This sequence belongs to the diol/glycerol dehydratase large subunit family. In terms of assembly, the propanediol dehydratase enzyme is a heterotrimeric complex composed of a large (PduC), a medium (PduD) and a small (PduE) subunit. Adenosylcob(III)alamin serves as cofactor.

Its subcellular location is the bacterial microcompartment. It catalyses the reaction propane-1,2-diol = propanal + H2O. It participates in polyol metabolism; 1,2-propanediol degradation. Functionally, part of the PduCDE complex that catalyzes the dehydration of 1,2-propanediol (1,2-PD) to propionaldehyde. This subunit is directly targeted to the bacterial microcompartment (BMC). In terms of biological role, expression of a cosmid containing the full 21-gene pdu operon in E.coli allows E.coli to grow on 1,2-propanediol (1,2-PD) with the appearance of BMCs in its cytoplasm. The 1,2-PD-specific bacterial microcompartment (BMC) concentrates low levels of 1,2-PD catabolic enzymes, concentrates volatile reaction intermediates thus enhancing pathway flux and keeps the level of toxic, mutagenic propionaldehyde low. The sequence is that of Propanediol dehydratase large subunit from Citrobacter freundii.